The primary structure comprises 332 residues: Aspartate carbamoyltransferase catalytic subunit (332 aa).

Carbamoyl phosphate contacts are provided by Arg-78 and Thr-79. Lys-106 is an L-aspartate binding site. Positions 128, 156, and 159 each coordinate carbamoyl phosphate. The L-aspartate site is built by Arg-189 and Arg-243. Positions 284 and 285 each coordinate carbamoyl phosphate.

This sequence belongs to the aspartate/ornithine carbamoyltransferase superfamily. ATCase family. In terms of assembly, heterododecamer (2C3:3R2) of six catalytic PyrB chains organized as two trimers (C3), and six regulatory PyrI chains organized as three dimers (R2).

The enzyme catalyses carbamoyl phosphate + L-aspartate = N-carbamoyl-L-aspartate + phosphate + H(+). Its pathway is pyrimidine metabolism; UMP biosynthesis via de novo pathway; (S)-dihydroorotate from bicarbonate: step 2/3. Functionally, catalyzes the condensation of carbamoyl phosphate and aspartate to form carbamoyl aspartate and inorganic phosphate, the committed step in the de novo pyrimidine nucleotide biosynthesis pathway. This chain is Aspartate carbamoyltransferase catalytic subunit, found in Caulobacter vibrioides (strain ATCC 19089 / CIP 103742 / CB 15) (Caulobacter crescentus).